The following is a 586-amino-acid chain: Methionine--tRNA ligase, mitochondrial (586 aa).

Residues 1-46 (MLRQCARWVLTRTRFGRGCRRYGSCSPSASGDAGEARAYFTTPIFY) constitute a mitochondrion transit peptide. The short motif at 45–55 (FYVNAAPHIGH) is the 'HIGH' region element. The 'KMSKS' region signature appears at 340-344 (KMSKS). Lysine 343 contributes to the ATP binding site.

Belongs to the class-I aminoacyl-tRNA synthetase family.

The protein resides in the mitochondrion matrix. The catalysed reaction is tRNA(Met) + L-methionine + ATP = L-methionyl-tRNA(Met) + AMP + diphosphate. This is Methionine--tRNA ligase, mitochondrial (Mars2) from Mus musculus (Mouse).